The primary structure comprises 319 residues: Translocon-associated protein subunit alpha (319 aa).

A signal peptide spans 1 to 21; sequence MRLLPRLLLLFLLAFPAAVLL. The Lumenal portion of the chain corresponds to 22–208; the sequence is RGGPGGSLAV…EREDGLDGET (187 aa). Residues 35–76 are compositionally biased toward acidic residues; the sequence is LTEDEETVEDPIIEDEDDEAEVEEDEPTDLAEEKEEEEDVSS. Positions 35 to 84 are disordered; that stretch reads LTEDEETVEDPIIEDEDDEAEVEEDEPTDLAEEKEEEEDVSSEPEASPSA. N-linked (GlcNAc...) asparagine glycosylation is found at Asn137 and Asn192. A helical membrane pass occupies residues 209 to 229; sequence IFMYMFLAGLGLLVVVGLHQL. Over 230–319 the chain is Cytoplasmic; the sequence is LESRKRKRPI…SLRQLAVCGI (90 aa). Ser248 bears the Phosphoserine mark. Thr261 carries the post-translational modification Phosphothreonine.

It belongs to the TRAP-alpha family. In terms of assembly, heterotetramer of TRAP-alpha, TRAP-beta, TRAP-delta and TRAP-gamma. Interacts with palmitoylated calnexin (CALX), the interaction is required for efficient folding of glycosylated proteins.

It is found in the endoplasmic reticulum membrane. In terms of biological role, TRAP proteins are part of a complex whose function is to bind calcium to the ER membrane and thereby regulate the retention of ER resident proteins. May be involved in the recycling of the translocation apparatus after completion of the translocation process or may function as a membrane-bound chaperone facilitating folding of translocated proteins. The sequence is that of Translocon-associated protein subunit alpha (Ssr1) from Rattus norvegicus (Rat).